The following is a 344-amino-acid chain: Heat-inducible transcription repressor HrcA (344 aa).

The protein belongs to the HrcA family.

In terms of biological role, negative regulator of class I heat shock genes (grpE-dnaK-dnaJ and groELS operons). Prevents heat-shock induction of these operons. This chain is Heat-inducible transcription repressor HrcA, found in Geobacillus sp. (strain WCH70).